A 251-amino-acid chain; its full sequence is Imidazole glycerol phosphate synthase subunit HisF (251 aa).

Active-site residues include aspartate 12 and aspartate 131.

Belongs to the HisA/HisF family. In terms of assembly, heterodimer of HisH and HisF.

Its subcellular location is the cytoplasm. The enzyme catalyses 5-[(5-phospho-1-deoxy-D-ribulos-1-ylimino)methylamino]-1-(5-phospho-beta-D-ribosyl)imidazole-4-carboxamide + L-glutamine = D-erythro-1-(imidazol-4-yl)glycerol 3-phosphate + 5-amino-1-(5-phospho-beta-D-ribosyl)imidazole-4-carboxamide + L-glutamate + H(+). It functions in the pathway amino-acid biosynthesis; L-histidine biosynthesis; L-histidine from 5-phospho-alpha-D-ribose 1-diphosphate: step 5/9. In terms of biological role, IGPS catalyzes the conversion of PRFAR and glutamine to IGP, AICAR and glutamate. The HisF subunit catalyzes the cyclization activity that produces IGP and AICAR from PRFAR using the ammonia provided by the HisH subunit. The sequence is that of Imidazole glycerol phosphate synthase subunit HisF from Helicobacter hepaticus (strain ATCC 51449 / 3B1).